A 531-amino-acid chain; its full sequence is Cytosolic Fe-S cluster assembly factor NAR1 (531 aa).

Residues Cys20, Cys72, Cys75, Cys78, Cys184, and Cys239 each coordinate [4Fe-4S] cluster. The tract at residues 395-426 (TSSTTTTKTNPLVARRKARLSSKRSESGAQDV) is disordered. Residues Cys442 and Cys446 each contribute to the [4Fe-4S] cluster site.

The protein belongs to the NARF family.

Component of the cytosolic Fe/S protein assembly machinery. Required for maturation of extramitochondrial Fe/S proteins. May play a role in the transfer of pre-assembled Fe/S clusters to target apoproteins. The sequence is that of Cytosolic Fe-S cluster assembly factor NAR1 (NAR1) from Meyerozyma guilliermondii (strain ATCC 6260 / CBS 566 / DSM 6381 / JCM 1539 / NBRC 10279 / NRRL Y-324) (Yeast).